Reading from the N-terminus, the 217-residue chain is Uracil-DNA glycosylase (217 aa).

Catalysis depends on D62, which acts as the Proton acceptor.

Belongs to the uracil-DNA glycosylase (UDG) superfamily. UNG family.

The protein localises to the cytoplasm. It carries out the reaction Hydrolyzes single-stranded DNA or mismatched double-stranded DNA and polynucleotides, releasing free uracil.. In terms of biological role, excises uracil residues from the DNA which can arise as a result of misincorporation of dUMP residues by DNA polymerase or due to deamination of cytosine. This chain is Uracil-DNA glycosylase, found in Streptococcus sanguinis (strain SK36).